We begin with the raw amino-acid sequence, 167 residues long: NAD(P)H-quinone oxidoreductase subunit I, chloroplastic (167 aa).

2 consecutive 4Fe-4S ferredoxin-type domains span residues 55 to 84 and 95 to 124; these read GRIH…VDWK and LNYS…MTEE. 8 residues coordinate [4Fe-4S] cluster: C64, C67, C70, C74, C104, C107, C110, and C114.

The protein belongs to the complex I 23 kDa subunit family. NDH is composed of at least 16 different subunits, 5 of which are encoded in the nucleus. Requires [4Fe-4S] cluster as cofactor.

The protein localises to the plastid. The protein resides in the chloroplast thylakoid membrane. It catalyses the reaction a plastoquinone + NADH + (n+1) H(+)(in) = a plastoquinol + NAD(+) + n H(+)(out). The catalysed reaction is a plastoquinone + NADPH + (n+1) H(+)(in) = a plastoquinol + NADP(+) + n H(+)(out). Its function is as follows. NDH shuttles electrons from NAD(P)H:plastoquinone, via FMN and iron-sulfur (Fe-S) centers, to quinones in the photosynthetic chain and possibly in a chloroplast respiratory chain. The immediate electron acceptor for the enzyme in this species is believed to be plastoquinone. Couples the redox reaction to proton translocation, and thus conserves the redox energy in a proton gradient. The sequence is that of NAD(P)H-quinone oxidoreductase subunit I, chloroplastic from Barbarea verna (Land cress).